A 731-amino-acid polypeptide reads, in one-letter code: Replication restart protein PriA (731 aa).

Residues 1-98 are 3'BD; sequence MSVAHVALPV…HPIGDVLFHA (98 aa). Positions 115-177 are WH; it reads WYWFATEQGQ…RGKGLAELAC (63 aa). Residues 200–375 form a helicase lobe 1 region; sequence TEQATAVGAI…VRQGKYRQLT (176 aa). The Helicase ATP-binding domain occupies 210–376; it reads HSAADRFSAW…RQGKYRQLTL (167 aa). Residue 223-230 participates in ATP binding; sequence GITGSGKT. ADP is bound by residues Gly-226, Gly-228, Lys-229, Thr-230, Glu-231, and Arg-263. The short motif at 319 to 322 is the DEAH box element; it reads DEEH. The short motif at 326–340 is the Aromatic-rich loop (ARL) element; sequence YKQQEGWRYHARDLA. The tract at residues 387–430 is helicase lobe 2, N-terminus; it reads QQHVLDLKGQPLQAGLSPALISRMRQHLQADNQVILFLNRRGFA. The segment at 431-485 is CRR; the sequence is PALLCHDCGWIAECPRCDSYYTLHQAQHHLRCHHCDSQRPIPRQCPSCGSTHLVP. Cys-435, Cys-438, Cys-444, Cys-447, Cys-462, Cys-465, Cys-475, and Cys-478 together coordinate Zn(2+). The region spanning 470–637 is the Helicase C-terminal domain; that stretch reads PIPRQCPSCG…QLPPWTSHVL (168 aa). The segment at 486–626 is helicase lobe 2, C-terminus; sequence VGIGTEQLEQ…AEQALAERQT (141 aa). Lys-543 serves as a coordination point for ADP. A CTD region spans residues 633-731; sequence TSHVLIRAED…WVLDVDPIEG (99 aa).

It belongs to the helicase family. PriA subfamily. As to quaternary structure, binds SSB. Component of the replication restart primosome. Zn(2+) is required as a cofactor.

It catalyses the reaction Couples ATP hydrolysis with the unwinding of duplex DNA by translocating in the 3'-5' direction.. The catalysed reaction is ATP + H2O = ADP + phosphate + H(+). With respect to regulation, ATPase activity is stimulated by single-stranded binding protein (SSB). Its function is as follows. Initiates the restart of stalled replication forks, which reloads the replicative helicase on sites other than the origin of replication. Recognizes and binds to abandoned replication forks and remodels them to uncover a helicase loading site. Promotes assembly of the primosome at these replication forks. Recognizes abandoned replication forks and remodels SSB on ssDNA to uncover a loading site for DnaB. Binds replication fork DNA, has DNA-dependent ATPase activity in the presence of replication fork DNA, restores normal cell growth and SOS induction to E.coli mutant pirA304. This Klebsiella pneumoniae subsp. pneumoniae (strain ATCC 700721 / MGH 78578) protein is Replication restart protein PriA.